The sequence spans 250 residues: ATP synthase subunit a (250 aa).

Helical transmembrane passes span 29-49 (ASLF…FATS), 84-104 (FFPL…LGMF), 114-134 (IIVT…YGFY), 143-163 (VFVP…IEII), 193-213 (FVAS…LPLI), and 216-236 (VALT…FAVL).

It belongs to the ATPase A chain family. As to quaternary structure, F-type ATPases have 2 components, CF(1) - the catalytic core - and CF(0) - the membrane proton channel. CF(1) has five subunits: alpha(3), beta(3), gamma(1), delta(1), epsilon(1). CF(0) has three main subunits: a(1), b(2) and c(9-12). The alpha and beta chains form an alternating ring which encloses part of the gamma chain. CF(1) is attached to CF(0) by a central stalk formed by the gamma and epsilon chains, while a peripheral stalk is formed by the delta and b chains.

It localises to the cell inner membrane. Its function is as follows. Key component of the proton channel; it plays a direct role in the translocation of protons across the membrane. The sequence is that of ATP synthase subunit a from Rhizobium leguminosarum bv. trifolii (strain WSM2304).